A 463-amino-acid polypeptide reads, in one-letter code: Fumarate hydratase class II (463 aa).

Substrate contacts are provided by residues 97–99 (SGT), 128–131 (HPND), 138–140 (SSN), and Thr-186. The active-site Proton donor/acceptor is the His-187. Residue Ser-317 is part of the active site. Residues Ser-318 and 323–325 (KVN) each bind substrate.

Belongs to the class-II fumarase/aspartase family. Fumarase subfamily. Homotetramer.

It is found in the cytoplasm. It carries out the reaction (S)-malate = fumarate + H2O. It functions in the pathway carbohydrate metabolism; tricarboxylic acid cycle; (S)-malate from fumarate: step 1/1. Functionally, involved in the TCA cycle. Catalyzes the stereospecific interconversion of fumarate to L-malate. The chain is Fumarate hydratase class II from Helicobacter pylori (strain ATCC 700392 / 26695) (Campylobacter pylori).